The chain runs to 461 residues: MAATVNLELDPIFLKALGFLHSKSKDSAEKLKALLDESLARGIDSSYRPTQKDVEPPKISSTKSLSIKQEPKTSSSLPSGSSNGKVLTAEKIKKEAEKRPADKMKDVTEGIDVPKKPRLEKPETRSSPITVQTSKDLSMADLSSFEETSADDFAMEMGLACVVCRQMTVASGNQLVECQECHNLYHQDCHKPQVTDKEVNDPRLVWYCARCTRQMKRMAQKTQKPPQKPAPTVVSVTPTVKDPLVKKPETKLKQETTFLAFKRTEVKPSTVISGNSSSNNVSSSVTSGLTGWAAFAAKTSSAGPSTAKLNSAAQNSSGKPAASSSNQKPVGLTGLATSSKGGIGSKIGSGNSTSPSVPLKPLPPLTLGKTGLSRSVSCDNVSKVGLPSPSSLVPGGSSQLSGNGNSATTGPSGSTTSKATSETSSSTSASLKGPTSQESQLNAMKRLQMVKKKAAQKKLKK.

The disordered stretch occupies residues 42 to 131 (GIDSSYRPTQ…PETRSSPITV (90 aa)). Residue Lys68 forms a Glycyl lysine isopeptide (Lys-Gly) (interchain with G-Cter in SUMO2) linkage. Basic and acidic residues predominate over residues 88–124 (TAEKIKKEAEKRPADKMKDVTEGIDVPKKPRLEKPET). A Phosphoserine modification is found at Ser127. Residues 158–214 (GLACVVCRQMTVASGNQLVECQECHNLYHQDCHKPQVTDKEVNDPRLVWYCARCTRQ) form a PHD-type zinc finger. Lys253 is covalently cross-linked (Glycyl lysine isopeptide (Lys-Gly) (interchain with G-Cter in SUMO2)). Residues 302 to 328 (AGPSTAKLNSAAQNSSGKPAASSSNQK) show a composition bias toward polar residues. Residues 302 to 443 (AGPSTAKLNS…PTSQESQLNA (142 aa)) form a disordered region. Composition is skewed to low complexity over residues 348 to 357 (GSGNSTSPSV) and 381 to 436 (VSKV…GPTS).

The protein belongs to the Integrator subunit 12 family. As to quaternary structure, component of the Integrator complex, composed of core subunits INTS1, INTS2, INTS3, INTS4, INTS5, INTS6, INTS7, INTS8, INTS9/RC74, INTS10, INTS11/CPSF3L, INTS12, INTS13, INTS14 and INTS15. The core complex associates with protein phosphatase 2A subunits PPP2CA and PPP2R1A, to form the Integrator-PP2A (INTAC) complex. Post-translationally, dephosphorylated at Ser-127 by the PNUTS-PP1 complex, promoting RNA polymerase II transcription pause-release.

It localises to the nucleus. Functionally, component of the integrator complex, a multiprotein complex that terminates RNA polymerase II (Pol II) transcription in the promoter-proximal region of genes. The integrator complex provides a quality checkpoint during transcription elongation by driving premature transcription termination of transcripts that are unfavorably configured for transcriptional elongation: the complex terminates transcription by (1) catalyzing dephosphorylation of the C-terminal domain (CTD) of Pol II subunit POLR2A/RPB1 and SUPT5H/SPT5, (2) degrading the exiting nascent RNA transcript via endonuclease activity and (3) promoting the release of Pol II from bound DNA. The integrator complex is also involved in terminating the synthesis of non-coding Pol II transcripts, such as enhancer RNAs (eRNAs), small nuclear RNAs (snRNAs), telomerase RNAs and long non-coding RNAs (lncRNAs). Mediates recruitment of cytoplasmic dynein to the nuclear envelope, probably as component of the integrator complex. This is Integrator complex subunit 12 (Ints12) from Mus musculus (Mouse).